The following is an 874-amino-acid chain: Alanine--tRNA ligase (874 aa).

Positions 562, 566, 664, and 668 each coordinate Zn(2+).

The protein belongs to the class-II aminoacyl-tRNA synthetase family. The cofactor is Zn(2+).

It localises to the cytoplasm. It carries out the reaction tRNA(Ala) + L-alanine + ATP = L-alanyl-tRNA(Ala) + AMP + diphosphate. Catalyzes the attachment of alanine to tRNA(Ala) in a two-step reaction: alanine is first activated by ATP to form Ala-AMP and then transferred to the acceptor end of tRNA(Ala). Also edits incorrectly charged Ser-tRNA(Ala) and Gly-tRNA(Ala) via its editing domain. The polypeptide is Alanine--tRNA ligase (Shewanella woodyi (strain ATCC 51908 / MS32)).